The chain runs to 393 residues: Lipid-A-disaccharide synthase (393 aa).

The protein belongs to the LpxB family.

The enzyme catalyses a lipid X + a UDP-2-N,3-O-bis[(3R)-3-hydroxyacyl]-alpha-D-glucosamine = a lipid A disaccharide + UDP + H(+). The protein operates within bacterial outer membrane biogenesis; LPS lipid A biosynthesis. Functionally, condensation of UDP-2,3-diacylglucosamine and 2,3-diacylglucosamine-1-phosphate to form lipid A disaccharide, a precursor of lipid A, a phosphorylated glycolipid that anchors the lipopolysaccharide to the outer membrane of the cell. In Actinobacillus pleuropneumoniae serotype 5b (strain L20), this protein is Lipid-A-disaccharide synthase.